The sequence spans 282 residues: Ubiquinone biosynthesis protein COQ4 homolog, mitochondrial (282 aa).

The N-terminal 30 residues, 1 to 30, are a transit peptide targeting the mitochondrion; it reads MFVRKSCYSLINATRRCLRYRQLSSTTAGT. Zn(2+) is bound by residues His186, Asp187, His190, and Glu202.

Belongs to the COQ4 family. As to quaternary structure, component of a multi-subunit COQ enzyme complex. It depends on Zn(2+) as a cofactor.

The protein localises to the mitochondrion inner membrane. It carries out the reaction a 4-hydroxy-3-methoxy-5-(all-trans-polyprenyl)benzoate + H(+) = a 2-methoxy-6-(all-trans-polyprenyl)phenol + CO2. It participates in cofactor biosynthesis; ubiquinone biosynthesis. In terms of biological role, lyase that catalyzes the C1-decarboxylation of 4-hydroxy-3-methoxy-5-(all-trans-polyprenyl)benzoic acid into 2-methoxy-6-(all-trans-polyprenyl)phenol during ubiquinone biosynthesis. The protein is Ubiquinone biosynthesis protein COQ4 homolog, mitochondrial of Anopheles gambiae (African malaria mosquito).